A 147-amino-acid polypeptide reads, in one-letter code: Large ribosomal subunit protein uL16 (147 aa).

It belongs to the universal ribosomal protein uL16 family. Part of the 50S ribosomal subunit.

In terms of biological role, binds 23S rRNA and is also seen to make contacts with the A and possibly P site tRNAs. The protein is Large ribosomal subunit protein uL16 of Caldicellulosiruptor saccharolyticus (strain ATCC 43494 / DSM 8903 / Tp8T 6331).